Consider the following 192-residue polypeptide: Peptidyl-tRNA hydrolase (192 aa).

Tyrosine 18 is a tRNA binding site. The active-site Proton acceptor is the histidine 23. Positions 69, 71, and 117 each coordinate tRNA.

Belongs to the PTH family. In terms of assembly, monomer.

The protein resides in the cytoplasm. It catalyses the reaction an N-acyl-L-alpha-aminoacyl-tRNA + H2O = an N-acyl-L-amino acid + a tRNA + H(+). Its function is as follows. Hydrolyzes ribosome-free peptidyl-tRNAs (with 1 or more amino acids incorporated), which drop off the ribosome during protein synthesis, or as a result of ribosome stalling. Catalyzes the release of premature peptidyl moieties from peptidyl-tRNA molecules trapped in stalled 50S ribosomal subunits, and thus maintains levels of free tRNAs and 50S ribosomes. This chain is Peptidyl-tRNA hydrolase, found in Neisseria meningitidis serogroup B (strain ATCC BAA-335 / MC58).